A 236-amino-acid polypeptide reads, in one-letter code: ATP synthase subunit a (236 aa).

Helical transmembrane passes span 18 to 38, 80 to 100, 112 to 132, 179 to 199, and 200 to 220; these read SNLL…VLCT, VTLL…AIVI, DPAI…YYGI, ILLS…IGAA, and IPML…AFIF.

It belongs to the ATPase A chain family. In terms of assembly, F-type ATPases have 2 components, CF(1) - the catalytic core - and CF(0) - the membrane proton channel. CF(1) has five subunits: alpha(3), beta(3), gamma(1), delta(1), epsilon(1). CF(0) has three main subunits: a(1), b(2) and c(9-12). The alpha and beta chains form an alternating ring which encloses part of the gamma chain. CF(1) is attached to CF(0) by a central stalk formed by the gamma and epsilon chains, while a peripheral stalk is formed by the delta and b chains.

Its subcellular location is the cell membrane. In terms of biological role, key component of the proton channel; it plays a direct role in the translocation of protons across the membrane. In Priestia megaterium (strain ATCC 12872 / QMB1551) (Bacillus megaterium), this protein is ATP synthase subunit a.